A 248-amino-acid polypeptide reads, in one-letter code: uncharacterized protein (248 aa).

8–32 (EVALVTGASSGIGKAIALELASAGL) lines the NADP(+) pocket. Serine 134 serves as a coordination point for substrate. Tyrosine 147 (proton acceptor) is an active-site residue.

The protein belongs to the short-chain dehydrogenases/reductases (SDR) family.

This is an uncharacterized protein from Sinorhizobium fredii (strain NBRC 101917 / NGR234).